A 270-amino-acid polypeptide reads, in one-letter code: uncharacterized protein (270 aa).

The disordered stretch occupies residues 235 to 270; the sequence is LADSDLEADSDDSESFEFVENPEPSENGSEPTIKND. Positions 238–251 are enriched in acidic residues; it reads SDLEADSDDSESFE. Residues 255–270 show a composition bias toward low complexity; the sequence is NPEPSENGSEPTIKND.

This is an uncharacterized protein from Halorubrum sp. PV6 (HRPV-1).